We begin with the raw amino-acid sequence, 202 residues long: Ig delta chain C region (202 aa).

The segment at 32-58 (KSKTFKLPETRNSQSSKKANPTPQAKN) is disordered. A compositionally biased stretch (polar residues) spans 41–56 (TRNSQSSKKANPTPQA). Residues 66-178 (PTATKNIVGA…TKLNASKSLE (113 aa)) enclose the Ig-like domain.

In Rattus norvegicus (Rat), this protein is Ig delta chain C region.